The primary structure comprises 712 residues: MSNQITYFATAARGFEEMLKIELEQICGADGKVVQGGVHFTTNQKGAYQALLHSRLASRILLPLVSTKIFSDLDLYATIIAINWADIFDPRDTFYVDFNGTNREIRNTQFGAMRVKDGIVDYFERKRFARPIVDKDRPDIRIHVYLDREKLIVSLDLSGEALHMRGYREDTGKAPLRETLAAIIVLRSGWQKGTPLVDPMCGSGTLLIEAAQMQAGIVPQLQRKYWGFNAWKGHQQAIWQQVLEEAHSQKNTQIDPLFYGFDLDHRVLAKAKQNAQNAGVAHLIHWQQADIAALKNPCLDQKGTLVSNPPYGERLGTTPALIALYSVFGQRLKQQFAGWNVSIFSGEPSLLNCLRLRSTRQFKAKNGPLDCLQKNYQIAEYAIHNQHISESSVAQNTQVAPDFANRLTKNIKKIEKWAKQQQLDAYRLYDADLPEYNFAVDRYSDHIVIQEYAAPKSIEQNKARQRLLDAVTATLHVTGIETNKLVLKVRQKQKGTNQYEKLANKGEYFYVNEYGAKLWVNLTDYLDTGIFLDHRLTRKMVGQMAKGKTFLNLFAYTGSATIHAALHGAKATTSVDMSNTYLNWAEQNLELNGLKSRNHRLFQADCLQWLAECRERFELIFVDPPTFSNSKRMEDSWDVQRDHIKLMTQLKRILTSDGMIVFSNNKRGFKMDFNGLTALGLVAENISYKTLPLDFERDPHIHNCWIIRHIEN.

Residues 46 to 157 (GAYQALLHSR…REKLIVSLDL (112 aa)) enclose the THUMP domain.

This sequence belongs to the methyltransferase superfamily. RlmKL family.

It is found in the cytoplasm. The enzyme catalyses guanosine(2445) in 23S rRNA + S-adenosyl-L-methionine = N(2)-methylguanosine(2445) in 23S rRNA + S-adenosyl-L-homocysteine + H(+). It carries out the reaction guanosine(2069) in 23S rRNA + S-adenosyl-L-methionine = N(2)-methylguanosine(2069) in 23S rRNA + S-adenosyl-L-homocysteine + H(+). In terms of biological role, specifically methylates the guanine in position 2445 (m2G2445) and the guanine in position 2069 (m7G2069) of 23S rRNA. The protein is Ribosomal RNA large subunit methyltransferase K/L of Haemophilus ducreyi (strain 35000HP / ATCC 700724).